Reading from the N-terminus, the 470-residue chain is Probable citrate synthase, mitochondrial (470 aa).

Residues His-297, His-351, and Asp-406 contribute to the active site.

Belongs to the citrate synthase family. Homodimer.

It localises to the mitochondrion matrix. The enzyme catalyses oxaloacetate + acetyl-CoA + H2O = citrate + CoA + H(+). It participates in carbohydrate metabolism; tricarboxylic acid cycle; isocitrate from oxaloacetate: step 1/2. The protein is Probable citrate synthase, mitochondrial of Leishmania braziliensis.